The chain runs to 729 residues: Catalase-peroxidase (729 aa).

Positions methionine 1 to arginine 26 are disordered. Residues tryptophan 97–tyrosine 219 constitute a cross-link (tryptophyl-tyrosyl-methioninium (Trp-Tyr) (with M-245)). The active-site Proton acceptor is the histidine 98. A cross-link (tryptophyl-tyrosyl-methioninium (Tyr-Met) (with W-97)) is located at residues tyrosine 219 to methionine 245. A heme b-binding site is contributed by histidine 260.

It belongs to the peroxidase family. Peroxidase/catalase subfamily. Homodimer or homotetramer. The cofactor is heme b. Post-translationally, formation of the three residue Trp-Tyr-Met cross-link is important for the catalase, but not the peroxidase activity of the enzyme.

It carries out the reaction H2O2 + AH2 = A + 2 H2O. It catalyses the reaction 2 H2O2 = O2 + 2 H2O. Its function is as follows. Bifunctional enzyme with both catalase and broad-spectrum peroxidase activity. This is Catalase-peroxidase from Sinorhizobium medicae (strain WSM419) (Ensifer medicae).